Reading from the N-terminus, the 545-residue chain is Chaperonin GroEL (545 aa).

ATP-binding positions include 30–33 (TLGP), Lys51, 87–91 (DGTTT), Gly415, and Asp496.

This sequence belongs to the chaperonin (HSP60) family. Forms a cylinder of 14 subunits composed of two heptameric rings stacked back-to-back. Interacts with the co-chaperonin GroES.

It localises to the cytoplasm. It catalyses the reaction ATP + H2O + a folded polypeptide = ADP + phosphate + an unfolded polypeptide.. Its function is as follows. Together with its co-chaperonin GroES, plays an essential role in assisting protein folding. The GroEL-GroES system forms a nano-cage that allows encapsulation of the non-native substrate proteins and provides a physical environment optimized to promote and accelerate protein folding. This chain is Chaperonin GroEL, found in Rhodobacter capsulatus (Rhodopseudomonas capsulata).